Here is a 375-residue protein sequence, read N- to C-terminus: MVDNSKIRVVVGMSGGVDSSVSALLLKQQGFDVVGVFMKNWDDTDDSGVCTATEDYEDVKKVADEIGIPYYSINFEKDYWERVFEYFLDEYKKGRTPNPDVMCNKEIKFKSFLDFAMDLDADYIAMGHYAATRVDDNGVVHMMRPKDGNKDQTYFLSQLSQDQLKKVIFPLANLTKPQVREIAIASGLATAKKKDSTGICFIGERNFKKFLSEFLPAQSGKMVTPDGKVVGEHAGLMYYTIGQRSGLGLGSTKESTDPWFVVGKDLKKNELIVEQGYDSKLLYATSLDASGVSFFTGQPDHDVDLKCTAKFRYRQPDVGVTMHYRAKDNTVHVEFDEPARAVTPGQAIVFYNGEECLGGATIDRAYQNEKQLQLV.

ATP contacts are provided by residues 12-19 (GMSGGVDS) and Met38. An interaction with target base in tRNA region spans residues 98 to 100 (NPD). Catalysis depends on Cys103, which acts as the Nucleophile. Residues Cys103 and Cys200 are joined by a disulfide bond. Residue Gly127 participates in ATP binding. The segment at 150–152 (KDQ) is interaction with tRNA. Catalysis depends on Cys200, which acts as the Cysteine persulfide intermediate. Residues 312–313 (RY) are interaction with tRNA.

It belongs to the MnmA/TRMU family.

It localises to the cytoplasm. It carries out the reaction S-sulfanyl-L-cysteinyl-[protein] + uridine(34) in tRNA + AH2 + ATP = 2-thiouridine(34) in tRNA + L-cysteinyl-[protein] + A + AMP + diphosphate + H(+). Catalyzes the 2-thiolation of uridine at the wobble position (U34) of tRNA, leading to the formation of s(2)U34. In Lactobacillus johnsonii (strain CNCM I-12250 / La1 / NCC 533), this protein is tRNA-specific 2-thiouridylase MnmA.